Here is a 161-residue protein sequence, read N- to C-terminus: Putative acetyltransferase SAR0816 (161 aa).

Belongs to the transferase hexapeptide repeat family.

This Staphylococcus aureus (strain MRSA252) protein is Putative acetyltransferase SAR0816.